Consider the following 457-residue polypeptide: 1-carboxybiuret hydrolase subunit AtzE (457 aa).

Catalysis depends on charge relay system residues lysine 74 and serine 150. The active-site Acyl-ester intermediate is serine 174.

Belongs to the amidase family. As to quaternary structure, heterotetramer consisting of 2 AtzE and 2 AtzG subunits.

The catalysed reaction is 1-carboxybiuret + H2O = urea-1,3-dicarboxylate + NH4(+). Its pathway is xenobiotic degradation; atrazine degradation. Its function is as follows. Hydrolyzes 1-carboxybiuret to urea-1,3-dicarboxylate and NH(3). This chain is 1-carboxybiuret hydrolase subunit AtzE, found in Pseudomonas sp. (strain ADP).